The following is a 458-amino-acid chain: NALCN channel auxiliary factor 1 (458 aa).

Residues 40-60 (LSLASLLFFTVLLSDHLWFCA) form a helical membrane-spanning segment. The segment at 70 to 155 (KEHQQQQRQQ…NRGKDDRGKA (86 aa)) is disordered. Residues 75–96 (QQRQQQQQQQQQRQRQQQQQQR) show a composition bias toward low complexity. Residues 136 to 145 (GDGGGGGGKG) are compositionally biased toward gly residues. 7 disulfide bridges follow: C191–C261, C226–C313, C246–C261, C304–C341, C324–C377, C330–C376, and C334–C361. N217 carries an N-linked (GlcNAc...) asparagine glycan. The chain crosses the membrane as a helical span at residues 417 to 437 (LKLCVLVLILLHTVLTASAAQ).

The protein belongs to the NALF family. As to quaternary structure, component of the NALCN channel complex. NALCN complex consists of NALCN and auxiliary subunits, UNC79, UNC80 and NACL1. These auxiliary subunits are essential for the NALCN channel function.

The protein resides in the cell membrane. Its function is as follows. Auxillary component of the NALCN sodium channel complex, a channel that regulates the resting membrane potential and controls neuronal excitability. The polypeptide is NALCN channel auxiliary factor 1 (Homo sapiens (Human)).